The following is a 531-amino-acid chain: Sterol 26-hydroxylase, mitochondrial (531 aa).

Residues 1-33 (MAALGCARLRWALRGAGRGLCPHGARAKAAIPA) constitute a mitochondrion transit peptide. Residue K283 is modified to N6-acetyllysine. The interval 384-398 (PLLKAVLKETLRLYP) is sterol-binding. Residue C476 coordinates heme. N6-acetyllysine occurs at positions 509 and 520.

Belongs to the cytochrome P450 family. As to quaternary structure, interacts with HSP70; this interaction is required for initial targeting to mitochondria. It depends on heme as a cofactor. As to expression, expressed in the neural retina and underlying retinal pigment epithelium (at protein level). Expressed in the gray and white matter of cerebellum (at protein level).

It is found in the mitochondrion inner membrane. The catalysed reaction is 5beta-cholestane-3alpha,7alpha,12alpha-triol + 6 reduced [adrenodoxin] + 3 O2 + 5 H(+) = (25R)-3alpha,7alpha,12alpha-trihydroxy-5beta-cholestan-26-oate + 6 oxidized [adrenodoxin] + 4 H2O. It carries out the reaction cholestanol + 2 reduced [adrenodoxin] + O2 + 2 H(+) = (25R)-26-hydroxycholestanol + 2 oxidized [adrenodoxin] + H2O. It catalyses the reaction (25R)-3beta-hydroxycholest-5-en-7-one-26-al + 2 reduced [adrenodoxin] + O2 + H(+) = (25R)-3beta-hydroxycholest-5-en-7-one-26-oate + 2 oxidized [adrenodoxin] + H2O. The enzyme catalyses (25R)-3beta,26-dihydroxycholest-5-en-7-one + 2 reduced [adrenodoxin] + O2 + 2 H(+) = (25R)-3beta-hydroxycholest-5-en-7-one-26-al + 2 oxidized [adrenodoxin] + 2 H2O. The catalysed reaction is 7-oxocholesterol + 2 reduced [adrenodoxin] + O2 + 2 H(+) = (25R)-3beta,26-dihydroxycholest-5-en-7-one + 2 oxidized [adrenodoxin] + H2O. It carries out the reaction calciol + 2 reduced [adrenodoxin] + O2 + 2 H(+) = calcidiol + 2 oxidized [adrenodoxin] + H2O. It catalyses the reaction (25R)-5beta-cholestane-3alpha,7alpha,12alpha,26-tetrol + 2 reduced [adrenodoxin] + O2 + 2 H(+) = (25R)-3alpha,7alpha,12alpha-trihydroxy-5beta-cholestan-26-al + 2 oxidized [adrenodoxin] + 2 H2O. The enzyme catalyses 2 reduced [adrenodoxin] + cholesterol + O2 + 2 H(+) = (25R)-cholest-5-ene-3beta,26-diol + 2 oxidized [adrenodoxin] + H2O. The catalysed reaction is (25R)-3beta,4beta-dihydroxycholest-5-en-26-al + 2 reduced [adrenodoxin] + O2 + H(+) = (25R)-3beta,4beta-dihydroxycholest-5-en-26-oate + 2 oxidized [adrenodoxin] + H2O. It carries out the reaction (25R)-4beta,26-dihydroxycholesterol + 2 reduced [adrenodoxin] + O2 + 2 H(+) = (25R)-3beta,4beta-dihydroxycholest-5-en-26-al + 2 oxidized [adrenodoxin] + 2 H2O. It catalyses the reaction 4beta-hydroxycholesterol + 2 reduced [adrenodoxin] + O2 + 2 H(+) = (25R)-4beta,26-dihydroxycholesterol + 2 oxidized [adrenodoxin] + H2O. The enzyme catalyses (25R)-3beta-hydroxy-5-cholesten-26-al + 2 reduced [adrenodoxin] + O2 + H(+) = (25R)-3beta-hydroxy-5-cholestenoate + 2 oxidized [adrenodoxin] + H2O. The catalysed reaction is (25R)-cholest-5-ene-3beta,26-diol + 2 reduced [adrenodoxin] + O2 + 2 H(+) = (25R)-3beta-hydroxy-5-cholesten-26-al + 2 oxidized [adrenodoxin] + 2 H2O. It carries out the reaction (25R)-3alpha,7alpha,12alpha-trihydroxy-5beta-cholestan-26-al + 2 reduced [adrenodoxin] + O2 + H(+) = (25R)-3alpha,7alpha,12alpha-trihydroxy-5beta-cholestan-26-oate + 2 oxidized [adrenodoxin] + H2O. It catalyses the reaction 5beta-cholestane-3alpha,7alpha,12alpha-triol + 2 reduced [adrenodoxin] + O2 + 2 H(+) = (25R)-5beta-cholestane-3alpha,7alpha,12alpha,26-tetrol + 2 oxidized [adrenodoxin] + H2O. It participates in hormone biosynthesis; cholecalciferol biosynthesis. Its pathway is steroid metabolism; cholesterol degradation. The protein operates within lipid metabolism; bile acid biosynthesis. Its function is as follows. Cytochrome P450 monooxygenase that catalyzes regio- and stereospecific hydroxylation of cholesterol and its derivatives. Hydroxylates (with R stereochemistry) the terminal methyl group of cholesterol side-chain in a three step reaction to yield at first a C26 alcohol, then a C26 aldehyde and finally a C26 acid. Regulates cholesterol homeostasis by catalyzing the conversion of excess cholesterol to bile acids via both the 'neutral' (classic) and the 'acid' (alternative) pathways. May also regulate cholesterol homeostasis via generation of active oxysterols, which act as ligands for NR1H2 and NR1H3 nuclear receptors, modulating the transcription of genes involved in lipid metabolism. Plays a role in cholestanol metabolism in the cerebellum. Similarly to cholesterol, hydroxylates cholestanol and may facilitate sterol diffusion through the blood-brain barrier to the systemic circulation for further degradation. Also hydroxylates retinal 7-ketocholesterol, a noxious oxysterol with pro-inflammatory and pro-apoptotic effects, and may play a role in its elimination from the retinal pigment epithelium. May play a redundant role in vitamin D biosynthesis. Catalyzes 25-hydroxylation of vitamin D3 that is required for its conversion to a functionally active form. In Homo sapiens (Human), this protein is Sterol 26-hydroxylase, mitochondrial.